Consider the following 200-residue polypeptide: TATA-box-binding protein 2 (200 aa).

2 tandem repeats follow at residues 25-101 and 115-192.

It belongs to the TBP family. In terms of assembly, belongs to the TFIID complex together with the TBP-associated factors (TAFs). Binds DNA as monomer.

Its subcellular location is the nucleus. Its function is as follows. General transcription factor that functions at the core of the DNA-binding multiprotein factor TFIID. Binding of TFIID to the TATA box is the initial transcriptional step of the pre-initiation complex (PIC), playing a role in the activation of eukaryotic genes transcribed by RNA polymerase II. This chain is TATA-box-binding protein 2 (TBP2), found in Zea mays (Maize).